A 241-amino-acid chain; its full sequence is GTP cyclohydrolase III (241 aa).

This sequence belongs to the archaeal-type GTP cyclohydrolase family.

It catalyses the reaction GTP + 3 H2O = 2-amino-5-formylamino-6-(5-phospho-D-ribosylamino)pyrimidin-4(3H)-one + 2 phosphate + 2 H(+). Functionally, catalyzes the formation of 2-amino-5-formylamino-6-ribofuranosylamino-4(3H)-pyrimidinone ribonucleotide monophosphate and inorganic phosphate from GTP. Also has an independent pyrophosphate phosphohydrolase activity. This is GTP cyclohydrolase III from Aeropyrum pernix (strain ATCC 700893 / DSM 11879 / JCM 9820 / NBRC 100138 / K1).